A 130-amino-acid chain; its full sequence is Small ribosomal subunit protein uS9 (130 aa).

Belongs to the universal ribosomal protein uS9 family.

The chain is Small ribosomal subunit protein uS9 from Shewanella amazonensis (strain ATCC BAA-1098 / SB2B).